The following is a 96-amino-acid chain: UPF0235 protein Sputcn32_2690 (96 aa).

It belongs to the UPF0235 family.

The polypeptide is UPF0235 protein Sputcn32_2690 (Shewanella putrefaciens (strain CN-32 / ATCC BAA-453)).